Consider the following 145-residue polypeptide: D-aminoacyl-tRNA deacylase (145 aa).

Positions 137–138 (GP) match the Gly-cisPro motif, important for rejection of L-amino acids motif.

This sequence belongs to the DTD family. As to quaternary structure, homodimer.

The protein resides in the cytoplasm. The catalysed reaction is glycyl-tRNA(Ala) + H2O = tRNA(Ala) + glycine + H(+). It catalyses the reaction a D-aminoacyl-tRNA + H2O = a tRNA + a D-alpha-amino acid + H(+). Its function is as follows. An aminoacyl-tRNA editing enzyme that deacylates mischarged D-aminoacyl-tRNAs. Also deacylates mischarged glycyl-tRNA(Ala), protecting cells against glycine mischarging by AlaRS. Acts via tRNA-based rather than protein-based catalysis; rejects L-amino acids rather than detecting D-amino acids in the active site. By recycling D-aminoacyl-tRNA to D-amino acids and free tRNA molecules, this enzyme counteracts the toxicity associated with the formation of D-aminoacyl-tRNA entities in vivo and helps enforce protein L-homochirality. The chain is D-aminoacyl-tRNA deacylase from Shewanella halifaxensis (strain HAW-EB4).